The chain runs to 329 residues: Serpentine receptor class alpha-3 (329 aa).

The next 7 helical transmembrane spans lie at 25-45, 57-77, 104-124, 144-164, 187-207, 238-258, and 273-293; these read LIYF…LKVI, ILLY…GITI, YLEM…GLLF, GIIT…IIIW, TMFF…SLLI, ICFL…GVFL, and FWVV…ILLI.

Belongs to the nematode receptor-like protein sra family.

It is found in the membrane. This Caenorhabditis elegans protein is Serpentine receptor class alpha-3 (sra-3).